The chain runs to 101 residues: Small ribosomal subunit protein uS14 (101 aa).

It belongs to the universal ribosomal protein uS14 family. In terms of assembly, part of the 30S ribosomal subunit. Contacts proteins S3 and S10.

In terms of biological role, binds 16S rRNA, required for the assembly of 30S particles and may also be responsible for determining the conformation of the 16S rRNA at the A site. This chain is Small ribosomal subunit protein uS14, found in Actinobacillus pleuropneumoniae serotype 5b (strain L20).